The primary structure comprises 261 residues: Small ribosomal subunit protein eS1 (261 aa).

Residues 1–18 (MAVGKNKRISKGKKGGKK) show a composition bias toward basic residues. The disordered stretch occupies residues 1–21 (MAVGKNKRISKGKKGGKKKAT).

It belongs to the eukaryotic ribosomal protein eS1 family. In terms of assembly, component of the small ribosomal subunit. Mature ribosomes consist of a small (40S) and a large (60S) subunit. The 40S subunit contains about 33 different proteins and 1 molecule of RNA (18S). The 60S subunit contains about 49 different proteins and 3 molecules of RNA (25S, 5.8S and 5S).

The protein localises to the cytoplasm. This chain is Small ribosomal subunit protein eS1 (cyc07), found in Daucus carota (Wild carrot).